The chain runs to 198 residues: Beta-crystallin A1-2 (198 aa).

Residues 1-13 (MAQINPLPVPLGP) are N-terminal arm. Beta/gamma crystallin 'Greek key' domains lie at 14–53 (WKIT…KVEC) and 54–100 (GAWI…RPIC). Residues 101–106 (SANHIE) are connecting peptide. Beta/gamma crystallin 'Greek key' domains are found at residues 107–148 (SKLV…KVQC) and 149–197 (GAWV…RRIQ).

The protein belongs to the beta/gamma-crystallin family. Homo/heterodimer, or complexes of higher-order. The structure of beta-crystallin oligomers seems to be stabilized through interactions between the N-terminal arms. The N-terminus is blocked.

In terms of biological role, crystallins are the dominant structural components of the vertebrate eye lens. This chain is Beta-crystallin A1-2, found in Aquarana catesbeiana (American bullfrog).